A 312-amino-acid polypeptide reads, in one-letter code: Ribosomal RNA small subunit methyltransferase H (312 aa).

Residues 35–37 (GGH), Asp-55, Phe-79, Asp-101, and Gln-108 contribute to the S-adenosyl-L-methionine site. The segment at 286–306 (LKPSEHEVNENSRSRSSVLRV) is disordered. The segment covering 287-298 (KPSEHEVNENSR) has biased composition (basic and acidic residues).

Belongs to the methyltransferase superfamily. RsmH family.

It is found in the cytoplasm. It catalyses the reaction cytidine(1402) in 16S rRNA + S-adenosyl-L-methionine = N(4)-methylcytidine(1402) in 16S rRNA + S-adenosyl-L-homocysteine + H(+). Its function is as follows. Specifically methylates the N4 position of cytidine in position 1402 (C1402) of 16S rRNA. The polypeptide is Ribosomal RNA small subunit methyltransferase H (Aeromonas hydrophila subsp. hydrophila (strain ATCC 7966 / DSM 30187 / BCRC 13018 / CCUG 14551 / JCM 1027 / KCTC 2358 / NCIMB 9240 / NCTC 8049)).